A 418-amino-acid polypeptide reads, in one-letter code: Alpha-(1-&gt;3)-arabinofuranosyltransferase (418 aa).

A run of 11 helical transmembrane segments spans residues 25 to 45 (NAVAWPLAMLLMAHRFFVLAI), 81 to 101 (YLYNPGATLLLAPLGYITHFT), 102 to 122 (LARWMFIAVNLLAIVLAFGLL), 125 to 145 (LSGWALRSMVWPIAIALAMLT), 153 to 173 (IFSNINGILLLMLAIFLWCVV), 183 to 203 (VIGLAILIKPMFLPLLFLPLV), 210 to 230 (LILGILTPVIFNAVAWFLVPG), 266 to 286 (MEITWFLIFGAMVGLAVLALL), 293 to 312 (PYFWAATTTGVLLTGVFFLS), 327 to 349 (IFTLLGSRSVFHNWVAWVAAYFF), and 372 to 392 (ATVGWGLLIVVTFVSALIWFI).

Belongs to the glycosyltransferase 87 family.

The protein resides in the cell membrane. It catalyses the reaction Adds an alpha-D-arabinofuranosyl group from trans,octacis-decaprenylphospho-beta-D-arabinofuranose at the 3-O-position of an alpha-(1-&gt;5)-arabinofuranan chain attached to a beta-(1-&gt;5)-galactofuranan chain.. Its pathway is cell wall biogenesis; cell wall polysaccharide biosynthesis. In terms of biological role, involved in the biosynthesis of the arabinogalactan (AG) region of the mycolylarabinogalactan-peptidoglycan (mAGP) complex, an essential component of the corynebacterial cell wall. Catalyzes the addition of an arabinofuranosyl (Araf) residue from the sugar donor beta-D-arabinofuranosyl-1-monophosphoryldecaprenol (DPA) on the C-3 of an alpha-(1-&gt;5)-linked Araf from the arabinan backbone of AG. This chain is Alpha-(1-&gt;3)-arabinofuranosyltransferase, found in Corynebacterium glutamicum (strain ATCC 13032 / DSM 20300 / JCM 1318 / BCRC 11384 / CCUG 27702 / LMG 3730 / NBRC 12168 / NCIMB 10025 / NRRL B-2784 / 534).